Here is a 148-residue protein sequence, read N- to C-terminus: MTATRIFYEGRFVTLKEKIKTLGRFCTVGVGNTLIDFGVFFLLTACHVSYLPAQICSYTAGIVNSYVWNRNWTFCVKRKADGKEIVRFLMINIAASGITFLLLYLFQNCGCSLLVSKLAATIGGMMMNFIGNRIWVFGDSLKNIQDQE.

Transmembrane regions (helical) follow at residues 25–45 (FCTV…LLTA), 85–105 (IVRF…LLYL), and 118–138 (LAAT…WVFG).

Belongs to the GtrA family.

The protein resides in the cell membrane. This is an uncharacterized protein from Bacillus subtilis (strain 168).